We begin with the raw amino-acid sequence, 405 residues long: Serine/threonine transporter SstT (405 aa).

8 consecutive transmembrane segments (helical) span residues 13-33 (GGSL…LAGF), 43-63 (FLGD…VFVL), 82-102 (IILL…LMSF), 141-161 (ALIN…GIAL), 185-205 (FVIC…IAQT), 217-237 (LGVL…LIVF), 298-318 (MAGA…TLGI), and 339-359 (ASGV…LFGI).

This sequence belongs to the dicarboxylate/amino acid:cation symporter (DAACS) (TC 2.A.23) family.

The protein localises to the cell inner membrane. The catalysed reaction is L-serine(in) + Na(+)(in) = L-serine(out) + Na(+)(out). It catalyses the reaction L-threonine(in) + Na(+)(in) = L-threonine(out) + Na(+)(out). Involved in the import of serine and threonine into the cell, with the concomitant import of sodium (symport system). The protein is Serine/threonine transporter SstT of Shewanella amazonensis (strain ATCC BAA-1098 / SB2B).